Consider the following 405-residue polypeptide: Exodeoxyribonuclease 7 large subunit (405 aa).

The protein belongs to the XseA family. As to quaternary structure, heterooligomer composed of large and small subunits.

Its subcellular location is the cytoplasm. It carries out the reaction Exonucleolytic cleavage in either 5'- to 3'- or 3'- to 5'-direction to yield nucleoside 5'-phosphates.. Bidirectionally degrades single-stranded DNA into large acid-insoluble oligonucleotides, which are then degraded further into small acid-soluble oligonucleotides. This Syntrophomonas wolfei subsp. wolfei (strain DSM 2245B / Goettingen) protein is Exodeoxyribonuclease 7 large subunit.